A 46-amino-acid chain; its full sequence is U-myrmeciitoxin(01)-Mg6a (46 aa).

The N-terminal stretch at 1-20 (MNLKTFCFFLLGIFVTLTVT) is a signal peptide. Residues 21-33 (VIPIANADAEADT) constitute a propeptide that is removed on maturation.

In terms of processing, contains 1 disulfide bond. Expressed by the venom gland.

It is found in the secreted. The protein is U-myrmeciitoxin(01)-Mg6a of Myrmecia gulosa (Red bulldog ant).